Reading from the N-terminus, the 483-residue chain is FAD-dependent oxidoreductase oblC (483 aa).

An N-terminal signal peptide occupies residues 1–21; the sequence is MRSVTSLVSFSACLLASSVTA. 4 N-linked (GlcNAc...) asparagine glycosylation sites follow: asparagine 100, asparagine 137, asparagine 190, and asparagine 240.

This sequence belongs to the beta-cyclopiazonate dehydrogenase family. FAD serves as cofactor.

Its pathway is secondary metabolite biosynthesis; terpenoid biosynthesis. In terms of biological role, FAD-dependent oxidoreductase; part of the gene cluster that mediates the biosynthesis of the sesterterpenes ophiobolins, fungal phytotoxins with potential anti-cancer activities. The first step of the pathway is performed by the sesterterpene synthase oblA that possesses both prenyl transferase and terpene cyclase activity, converting isopentenyl diphosphate and dimethylallyl diphosphate into geranylfarnesyl diphosphate (GFPP) and further converting GFPP into ophiobolin F, respectively. Other sesterterpenoids (C(25) terpenoids) are found as minor products of oblA. The cytochrome P450 monooxygenase oblB then catalyzes a four-step oxidative transformation of ophiobolin F to yield ophiobolin C. The FAD-dependent oxidoreductase oblC might be involved in a later oxidation step that produces ophiobolin A. This Cochliobolus heterostrophus (strain C5 / ATCC 48332 / race O) (Southern corn leaf blight fungus) protein is FAD-dependent oxidoreductase oblC.